Here is a 190-residue protein sequence, read N- to C-terminus: uncharacterized protein (190 aa).

The Macro domain occupies 1–185 (MITMFKIVRG…LALETIGLGD (185 aa)).

This is an uncharacterized protein from Pyrococcus horikoshii (strain ATCC 700860 / DSM 12428 / JCM 9974 / NBRC 100139 / OT-3).